Reading from the N-terminus, the 331-residue chain is Ribosomal RNA small subunit methyltransferase H (331 aa).

S-adenosyl-L-methionine is bound by residues 39-41, D56, F83, D100, and Q107; that span reads GGY.

The protein belongs to the methyltransferase superfamily. RsmH family.

Its subcellular location is the cytoplasm. It carries out the reaction cytidine(1402) in 16S rRNA + S-adenosyl-L-methionine = N(4)-methylcytidine(1402) in 16S rRNA + S-adenosyl-L-homocysteine + H(+). In terms of biological role, specifically methylates the N4 position of cytidine in position 1402 (C1402) of 16S rRNA. This is Ribosomal RNA small subunit methyltransferase H from Bartonella bacilliformis (strain ATCC 35685 / KC583 / Herrer 020/F12,63).